The chain runs to 109 residues: RNA-binding protein Hfq (109 aa).

The 60-residue stretch at 9-68 (DPFLNALRKEKVSVSVYLVNGIKLQGQVEAFDQFCIVLRNTVNQMVYKHAISTIVPAKSV) folds into the Sm domain.

It belongs to the Hfq family. In terms of assembly, homohexamer.

In terms of biological role, RNA chaperone that binds small regulatory RNA (sRNAs) and mRNAs to facilitate mRNA translational regulation in response to envelope stress, environmental stress and changes in metabolite concentrations. Also binds with high specificity to tRNAs. The chain is RNA-binding protein Hfq from Francisella philomiragia subsp. philomiragia (strain ATCC 25017 / CCUG 19701 / FSC 153 / O#319-036).